A 158-amino-acid polypeptide reads, in one-letter code: MAIDGILKQGFITTSADKFLNWAKTGSMWPMTFGLACCAVEMMHAGAARYDLDQFGIIFRPSPRQSDLMIVAGTLCNKMGPALRKVYDQMPEPRWVVSMGSCANGGGYYHYSYSVVRGCDRIVPVDVYVPGCPPTAEALVYGLLQMQNKIRLTNTIAR.

Positions 37, 38, 102, and 132 each coordinate [4Fe-4S] cluster.

It belongs to the complex I 20 kDa subunit family. NDH-1 is composed of 14 different subunits. Subunits NuoB, C, D, E, F, and G constitute the peripheral sector of the complex. It depends on [4Fe-4S] cluster as a cofactor.

It localises to the cell inner membrane. It catalyses the reaction a quinone + NADH + 5 H(+)(in) = a quinol + NAD(+) + 4 H(+)(out). Its function is as follows. NDH-1 shuttles electrons from NADH, via FMN and iron-sulfur (Fe-S) centers, to quinones in the respiratory chain. Couples the redox reaction to proton translocation (for every two electrons transferred, four hydrogen ions are translocated across the cytoplasmic membrane), and thus conserves the redox energy in a proton gradient. In Bordetella parapertussis (strain 12822 / ATCC BAA-587 / NCTC 13253), this protein is NADH-quinone oxidoreductase subunit B.